The primary structure comprises 88 residues: Small ribosomal subunit protein bS20 (88 aa).

Positions Met1–Asn21 are disordered.

Belongs to the bacterial ribosomal protein bS20 family.

Binds directly to 16S ribosomal RNA. The sequence is that of Small ribosomal subunit protein bS20 from Sinorhizobium fredii (strain NBRC 101917 / NGR234).